The sequence spans 345 residues: Myb/SANT-like DNA-binding domain-containing protein 4 (345 aa).

One can recognise a Myb-like domain in the interval 4 to 77 (LKRKRKSNFS…EVKRRYLDWR (74 aa)). A Glycyl lysine isopeptide (Lys-Gly) (interchain with G-Cter in SUMO2) cross-link involves residue K9. A Phosphoserine modification is found at S106. Glycyl lysine isopeptide (Lys-Gly) (interchain with G-Cter in SUMO2) cross-links involve residues K114 and K142. The interval 139–175 (TEVKVEEEERDPQSPEFEIEEEEEMLSSVIPDSRREN) is disordered. T188 is subject to Phosphothreonine. A coiled-coil region spans residues 202-344 (HLLMNIEKQK…RLRIQKEGHL (143 aa)). Glycyl lysine isopeptide (Lys-Gly) (interchain with G-Cter in SUMO2) cross-links involve residues K237, K254, and K273.

This Mus musculus (Mouse) protein is Myb/SANT-like DNA-binding domain-containing protein 4 (Msantd4).